A 61-amino-acid polypeptide reads, in one-letter code: uncharacterized protein (61 aa).

This is an uncharacterized protein from Dictyostelium discoideum (Social amoeba).